The following is a 557-amino-acid chain: Formate--tetrahydrofolate ligase (557 aa).

66-73 (TPAGEGKS) is an ATP binding site.

It belongs to the formate--tetrahydrofolate ligase family.

It catalyses the reaction (6S)-5,6,7,8-tetrahydrofolate + formate + ATP = (6R)-10-formyltetrahydrofolate + ADP + phosphate. It functions in the pathway one-carbon metabolism; tetrahydrofolate interconversion. This Clostridium botulinum (strain ATCC 19397 / Type A) protein is Formate--tetrahydrofolate ligase.